Here is a 183-residue protein sequence, read N- to C-terminus: MREYKVVVLGSGGVGKSALTVQFVTGSFIEKYDPTIEDFYRKEIEVDSSPSVLEILDTAGTEQFASMRDLYIKNGQGFILVYSLVNQQSFQDIKPMRDQIIRVKRYERVPMILVGNKVDLEGEREVSYGEGKALAEEWSCPFMETSAKNKASVDELFAEIVRQMNYAAQPNGDEGCCSACVIL.

10–17 (GSGGVGKS) lines the GTP pocket. The short motif at 32 to 40 (YDPTIEDFY) is the Effector region element. GTP-binding positions include 57 to 61 (DTAGT) and 116 to 119 (NKVD). 2 S-palmitoyl cysteine lipidation sites follow: Cys-176 and Cys-177. Cys-180 is modified (cysteine methyl ester). Residue Cys-180 is the site of S-farnesyl cysteine attachment. The propeptide at 181 to 183 (VIL) is removed in mature form.

Belongs to the small GTPase superfamily. Ras family. Interacts (GTP-bound form) with RUNDC3A. Interacts with PLCE1. Interacts with ARHGAP29, SGSM1, SGSM2 and SGSM3. Interacts (GTP-bound form preferentially) with TNIK (via the CNH domain); the interaction is direct and recruits RAP2A to the E3 ubiquitin ligase NEDD4. Interacts with MINK1. Interacts (GTP-bound form preferentially) with MAP4K4. Interacts with cytoskeletal actin. Interacts with RGS14; the interaction is GTP-dependent. Post-translationally, ubiquitinated; undergoes 'Lys-63' monoubiquitination and diubiquitination by NEDD4. Multiple lysine residues are probably modified. Ubiquitination requires TNIK, prevents interaction with effectors and inactivates RAP2A. Ubiquitination by the ECS(RAB40B) complex leads to RAP2A localization to lamellipodia plasma membrane, activation, and regulation of sorting at early endosomes for recycling to the lamellipodia plasma membrane. In terms of processing, palmitoylated. Palmitoylation is required for association with recycling endosome membranes and activation of TNIK.

It localises to the midbody. Its subcellular location is the cell projection. The protein resides in the lamellipodium membrane. The protein localises to the golgi apparatus. It is found in the recycling endosome membrane. It localises to the lysosome. It carries out the reaction GTP + H2O = GDP + phosphate + H(+). With respect to regulation, activated by the guanine nucleotide-exchange factors RAPGEF3 and RAPGEF4 in a cAMP-dependent manner. Nucleotide exchange is also specifically stimulated by RAPGEF5, RASGEF1A and RASGEF1B. In terms of biological role, small GTP-binding protein which cycles between a GDP-bound inactive and a GTP-bound active form. In its active form interacts with and regulates several effectors including MAP4K4, MINK1 and TNIK. Part of a signaling complex composed of NEDD4, RAP2A and TNIK which regulates neuronal dendrite extension and arborization during development. More generally, it is part of several signaling cascades and may regulate cytoskeletal rearrangements, cell migration, cell adhesion and cell spreading. The protein is Ras-related protein Rap-2a (RAP2A) of Sus scrofa (Pig).